Consider the following 327-residue polypeptide: WRKY transcription factor WRKY76 (327 aa).

Residues 56 to 76 (AKIVEAKVTQMSEENRRLTEV) are a coiled coil. The interval 87–135 (RLGLDGSASPPRPVSPLSGKKRSRESMETANSCDANSNRHQGGDADHAE) is disordered. Residues 106 to 112 (KKRSRES) carry the Nuclear localization signal motif. Residues 114–126 (ETANSCDANSNRH) show a composition bias toward polar residues. The segment at residues 160–226 (DTSLVVKDGY…YEGEHNHPHP (67 aa)) is a DNA-binding region (WRKY).

This sequence belongs to the WRKY group II-a family.

The protein localises to the nucleus. Functionally, transcription repressor. Interacts specifically with the W box (5'-(T)TGAC[CT]-3'), a frequently occurring elicitor-responsive cis-acting element. Regulates, probably indirectly, the activation of defense-related genes during defense response. Modulates plant innate immunity against X.oryzae pv. oryzae (Xoo). This Oryza sativa subsp. japonica (Rice) protein is WRKY transcription factor WRKY76.